We begin with the raw amino-acid sequence, 275 residues long: Large ribosomal subunit protein uL2c (275 aa).

The tract at residues 225–252 (MNPCDHPHGGGEGRSPIGRAKPVTPWGK) is disordered.

The protein belongs to the universal ribosomal protein uL2 family. As to quaternary structure, part of the 50S ribosomal subunit.

It localises to the plastid. The protein localises to the chloroplast. The protein is Large ribosomal subunit protein uL2c (rpl2) of Guillardia theta (Cryptophyte).